Here is a 931-residue protein sequence, read N- to C-terminus: Dymeclin (931 aa).

Disordered regions lie at residues 1–53 (MGVA…SSTT), 599–618 (SPSK…NTNN), and 839–931 (DANN…EKTN). Gly-2 carries the N-myristoyl glycine lipid modification. Low complexity-rich tracts occupy residues 27–49 (NNNK…NNNN) and 601–618 (SKIN…NTNN). Over residues 839 to 858 (DANNFTPKKQLSSDQLHSPP) the composition is skewed to polar residues. Composition is skewed to low complexity over residues 859-876 (TNTT…SSNT) and 889-901 (QLQQ…NQEQ). A compositionally biased stretch (polar residues) spans 919–931 (TTGVELSSTEKTN).

This sequence belongs to the dymeclin family.

This Dictyostelium discoideum (Social amoeba) protein is Dymeclin (dym).